A 364-amino-acid polypeptide reads, in one-letter code: Cobalt-precorrin-5B C(1)-methyltransferase (364 aa).

The protein belongs to the CbiD family.

It carries out the reaction Co-precorrin-5B + S-adenosyl-L-methionine = Co-precorrin-6A + S-adenosyl-L-homocysteine. Its pathway is cofactor biosynthesis; adenosylcobalamin biosynthesis; cob(II)yrinate a,c-diamide from sirohydrochlorin (anaerobic route): step 6/10. Its function is as follows. Catalyzes the methylation of C-1 in cobalt-precorrin-5B to form cobalt-precorrin-6A. This Pseudomonas entomophila (strain L48) protein is Cobalt-precorrin-5B C(1)-methyltransferase.